Reading from the N-terminus, the 230-residue chain is 5'-methylthioadenosine/S-adenosylhomocysteine nucleosidase (230 aa).

Catalysis depends on Glu-12, which acts as the Proton acceptor. Residues Gly-78, Ile-153, and 174–175 (ME) contribute to the substrate site. The active-site Proton donor is the Asp-198.

It belongs to the PNP/UDP phosphorylase family. MtnN subfamily.

It carries out the reaction S-adenosyl-L-homocysteine + H2O = S-(5-deoxy-D-ribos-5-yl)-L-homocysteine + adenine. The enzyme catalyses S-methyl-5'-thioadenosine + H2O = 5-(methylsulfanyl)-D-ribose + adenine. It catalyses the reaction 5'-deoxyadenosine + H2O = 5-deoxy-D-ribose + adenine. It participates in amino-acid biosynthesis; L-methionine biosynthesis via salvage pathway; S-methyl-5-thio-alpha-D-ribose 1-phosphate from S-methyl-5'-thioadenosine (hydrolase route): step 1/2. Catalyzes the irreversible cleavage of the glycosidic bond in both 5'-methylthioadenosine (MTA) and S-adenosylhomocysteine (SAH/AdoHcy) to adenine and the corresponding thioribose, 5'-methylthioribose and S-ribosylhomocysteine, respectively. Also cleaves 5'-deoxyadenosine, a toxic by-product of radical S-adenosylmethionine (SAM) enzymes, into 5-deoxyribose and adenine. The chain is 5'-methylthioadenosine/S-adenosylhomocysteine nucleosidase from Shewanella pealeana (strain ATCC 700345 / ANG-SQ1).